The primary structure comprises 347 residues: Aspartate-semialdehyde dehydrogenase (347 aa).

Residues 13–16 (TGAV) and 41–42 (RS) each bind NADP(+). Residue arginine 101 coordinates phosphate. The Acyl-thioester intermediate role is filled by cysteine 132. Position 159 (glutamine 159) interacts with substrate. 162–163 (SG) lines the NADP(+) pocket. Residue lysine 216 participates in phosphate binding. Residue arginine 238 coordinates substrate. Histidine 245 acts as the Proton acceptor in catalysis. Asparagine 319 lines the NADP(+) pocket.

The protein belongs to the aspartate-semialdehyde dehydrogenase family. In terms of assembly, homodimer.

The catalysed reaction is L-aspartate 4-semialdehyde + phosphate + NADP(+) = 4-phospho-L-aspartate + NADPH + H(+). The protein operates within amino-acid biosynthesis; L-lysine biosynthesis via DAP pathway; (S)-tetrahydrodipicolinate from L-aspartate: step 2/4. It functions in the pathway amino-acid biosynthesis; L-methionine biosynthesis via de novo pathway; L-homoserine from L-aspartate: step 2/3. It participates in amino-acid biosynthesis; L-threonine biosynthesis; L-threonine from L-aspartate: step 2/5. Its function is as follows. Catalyzes the NADPH-dependent formation of L-aspartate-semialdehyde (L-ASA) by the reductive dephosphorylation of L-aspartyl-4-phosphate. The protein is Aspartate-semialdehyde dehydrogenase of Legionella pneumophila.